The sequence spans 83 residues: MSGSTGERPFSDILTSIRYWVIHSITIPSLFVAGWLFVSTGLAYDVFGSPRPNEYFTEERQTTPLITDRFNALQQMDILTEGL.

A helical membrane pass occupies residues 21 to 35 (VIHSITIPSLFVAGW). H23 is a binding site for heme.

It belongs to the PsbE/PsbF family. In terms of assembly, heterodimer of an alpha subunit and a beta subunit. PSII is composed of 1 copy each of membrane proteins PsbA, PsbB, PsbC, PsbD, PsbE, PsbF, PsbH, PsbI, PsbJ, PsbK, PsbL, PsbM, PsbT, PsbX, PsbY, PsbZ, Psb30/Ycf12, at least 3 peripheral proteins of the oxygen-evolving complex and a large number of cofactors. It forms dimeric complexes. The cofactor is heme b.

It is found in the plastid. It localises to the chloroplast thylakoid membrane. Its function is as follows. This b-type cytochrome is tightly associated with the reaction center of photosystem II (PSII). PSII is a light-driven water:plastoquinone oxidoreductase that uses light energy to abstract electrons from H(2)O, generating O(2) and a proton gradient subsequently used for ATP formation. It consists of a core antenna complex that captures photons, and an electron transfer chain that converts photonic excitation into a charge separation. The chain is Cytochrome b559 subunit alpha from Nephroselmis olivacea (Green alga).